Consider the following 246-residue polypeptide: UDP-N-acetyl-D-mannosaminuronic acid transferase (246 aa).

This sequence belongs to the glycosyltransferase 26 family.

The enzyme catalyses UDP-N-acetyl-alpha-D-mannosaminouronate + N-acetyl-alpha-D-glucosaminyl-di-trans,octa-cis-undecaprenyl diphosphate = beta-D-ManNAcA-(1-&gt;4)-alpha-D-GlcNAc-di-trans,octa-cis-undecaprenyl diphosphate + UDP + H(+). It functions in the pathway bacterial outer membrane biogenesis; enterobacterial common antigen biosynthesis. Catalyzes the synthesis of Und-PP-GlcNAc-ManNAcA (Lipid II), the second lipid-linked intermediate involved in enterobacterial common antigen (ECA) synthesis. The chain is UDP-N-acetyl-D-mannosaminuronic acid transferase from Klebsiella pneumoniae (strain 342).